The chain runs to 159 residues: Late embryogenesis abundant protein 50 (159 aa).

SMP domains are found at residues 30–87 and 96–151; these read TTLT…RNQK and NLGD…YKLN.

Belongs to the LEA type SMP family.

The protein resides in the cytoplasm. It localises to the nucleus. LEA proteins are late embryonic proteins abundant in higher plant seed embryos. The function of those proteins is not known. This is Late embryogenesis abundant protein 50 from Arabidopsis thaliana (Mouse-ear cress).